Here is a 1180-residue protein sequence, read N- to C-terminus: MSADSSPLVGSTPTGYGTLTIGTSIDPLSSSVSSVRLSGYCGSPWRVIGYHVVVWMMAGIPLLLFRWKPLWGVRLRLRPCNLAHAETLVIEIRDKEDSSWQLFTVQVQTEAIGEGSLEPSPQSQAEDGRSQAAVGAVPEGAWKDTAQLHKSEEAVSVGQKRVLRYYLFQGQRYIWIETQQAFYQVSLLDHGRSCDDVHRSRHGLSLQDQMVRKAIYGPNVISIPVKSYPQLLVDEALNPYYGFQAFSIALWLADHYYWYALCIFLISSISICLSLYKTRKQSQTLRDMVKLSMRVCVCRPGGEEEWVDSSELVPGDCLVLPQEGGLMPCDAALVAGECMVNESSLTGESIPVLKTALPEGLGPYCAETHRRHTLFCGTLILQARAYVGPHVLAVVTRTGFCTAKGGLVSSILHPRPINFKFYKHSMKFVAALSVLALLGTIYSIFILYRNRVPLNEIVIRALDLVTVVVPPALPAAMTVCTLYAQSRLRRQGIFCIHPLRINLGGKLQLVCFDKTGTLTEDGLDVMGVVPLKGQAFLPLVPEPRRLPVGPLLRALATCHALSRLQDTPVGDPMDLKMVESTGWVLEEEPAADSAFGTQVLAVMRPPLWEPQLQAMEEPPVPVSVLHRFPFSSALQRMSVVVAWPGATQPEAYVKGSPELVAGLCNPETVPTDFAQMLQSYTAAGYRVVALASKPLPTVPSLEAAQQLTRDTVEGDLSLLGLLVMRNLLKPQTTPVIQALRRTRIRAVMVTGDNLQTAVTVARGCGMVAPQEHLIIVHATHPERGQPASLEFLPMESPTAVNGVKDPDQAASYTVEPDPRSRHLALSGPTFGIIVKHFPKLLPKVLVQGTVFARMAPEQKTELVCELQKLQYCVGMCGDGANDCGALKAADVGISLSQAEASVVSPFTSSMASIECVPMVIREGRCSLDTSFSVFKYMALYSLTQFISVLILYTINTNLGDLQFLAIDLVITTTVAVLMSRTGPALVLGRVRPPGALLSVPVLSSLLLQMVLVTGVQLGGYFLTLAQPWFVPLNRTVAAPDNLPNYENTVVFSLSSFQYLILAAAVSKGAPFRRPLYTNVPFLVALALLSSVLVGLVLVPGLLQGPLALRNITDTGFKLLLLGLVTLNFVGAFMLESVLDQCLPACLRRLRPKRASKKRFKQLERELAEQPWPPLPAGPLR.

Residues 1 to 44 lie on the Cytoplasmic side of the membrane; the sequence is MSADSSPLVGSTPTGYGTLTIGTSIDPLSSSVSSVRLSGYCGSP. The stretch at 45–65 is an intramembrane region; it reads WRVIGYHVVVWMMAGIPLLLF. Residues 66–235 are Cytoplasmic-facing; the sequence is RWKPLWGVRL…KSYPQLLVDE (170 aa). Ser-151 is modified (phosphoserine). The helical transmembrane segment at 236-253 threads the bilayer; that stretch reads ALNPYYGFQAFSIALWLA. Residues 254-256 are Lumenal-facing; it reads DHY. A helical transmembrane segment spans residues 257-276; sequence YWYALCIFLISSISICLSLY. The Cytoplasmic segment spans residues 277–427; that stretch reads KTRKQSQTLR…NFKFYKHSMK (151 aa). Residues 428–448 form a helical membrane-spanning segment; sequence FVAALSVLALLGTIYSIFILY. At 449 to 463 the chain is on the lumenal side; that stretch reads RNRVPLNEIVIRALD. A helical membrane pass occupies residues 464–484; it reads LVTVVVPPALPAAMTVCTLYA. The Cytoplasmic segment spans residues 485-930; sequence QSRLRRQGIF…REGRCSLDTS (446 aa). The active-site 4-aspartylphosphate intermediate is Asp-513. The Mg(2+) site is built by Asp-878 and Asp-882. A helical membrane pass occupies residues 931–951; sequence FSVFKYMALYSLTQFISVLIL. The Lumenal portion of the chain corresponds to 952–957; that stretch reads YTINTN. The helical transmembrane segment at 958-978 threads the bilayer; sequence LGDLQFLAIDLVITTTVAVLM. The Cytoplasmic portion of the chain corresponds to 979-994; that stretch reads SRTGPALVLGRVRPPG. Residues 995 to 1015 traverse the membrane as a helical segment; the sequence is ALLSVPVLSSLLLQMVLVTGV. Residues 1016–1048 are Lumenal-facing; the sequence is QLGGYFLTLAQPWFVPLNRTVAAPDNLPNYENT. N-linked (GlcNAc...) asparagine glycosylation occurs at Asn-1033. A helical transmembrane segment spans residues 1049–1069; that stretch reads VVFSLSSFQYLILAAAVSKGA. Residues 1070–1080 are Cytoplasmic-facing; it reads PFRRPLYTNVP. A helical transmembrane segment spans residues 1081–1101; the sequence is FLVALALLSSVLVGLVLVPGL. Topologically, residues 1102–1117 are lumenal; that stretch reads LQGPLALRNITDTGFK. Asn-1110 is a glycosylation site (N-linked (GlcNAc...) asparagine). Residues 1118–1138 form a helical membrane-spanning segment; the sequence is LLLLGLVTLNFVGAFMLESVL. Residues 1139–1180 are Cytoplasmic-facing; that stretch reads DQCLPACLRRLRPKRASKKRFKQLERELAEQPWPPLPAGPLR.

It belongs to the cation transport ATPase (P-type) (TC 3.A.3) family. Type V subfamily. As to quaternary structure, interacts with MYCBP2; the interaction inhibits the ubiquitination of TSC2 by MYCBP2. Interacts with HDAC6; the interaction results in recruitment of HDAC6 to lysosomes to promote CTTN deacetylation. Post-translationally, autophosphorylated. Accumulates in an inactive autophosphorylated state and autophosphorylation is stimulated by phosphatidic acid and phosphatidylinositol 3,5-bisphosphate but not by Mn(2+) or Zn(2+). The presence of spermine results in a dose-dependent reduction in autophosphorylation. Expressed in brain; protein levels are markedly increased in brain from subjects with Parkinson disease and subjects with dementia with Lewy bodies. Detected in pyramidal neurons located throughout the cingulate cortex (at protein level). In the substantia nigra, it is found in neuromelanin-positive dopaminergic neurons (at protein level).

It localises to the lysosome membrane. It is found in the late endosome membrane. The protein resides in the endosome. Its subcellular location is the multivesicular body membrane. The protein localises to the cytoplasmic vesicle. It localises to the autophagosome membrane. It carries out the reaction spermidine(out) + ATP + H2O = spermidine(in) + ADP + phosphate + H(+). The catalysed reaction is spermine(out) + ATP + H2O = spermine(in) + ADP + phosphate + H(+). Accumulates in an inactive autophosphorylated state. The presence of spermine results in a dose-dependent reduction in autophosphorylation. Functionally, ATPase which acts as a lysosomal polyamine exporter with high affinity for spermine. Also stimulates cellular uptake of polyamines and protects against polyamine toxicity. Plays a role in intracellular cation homeostasis and the maintenance of neuronal integrity. Contributes to cellular zinc homeostasis. Confers cellular protection against Mn(2+) and Zn(2+) toxicity and mitochondrial stress. Required for proper lysosomal and mitochondrial maintenance. Regulates the autophagy-lysosome pathway through the control of SYT11 expression at both transcriptional and post-translational levels. Facilitates recruitment of deacetylase HDAC6 to lysosomes to deacetylate CTTN, leading to actin polymerization, promotion of autophagosome-lysosome fusion and completion of autophagy. Promotes secretion of exosomes as well as secretion of SCNA via exosomes. Plays a role in lipid homeostasis. The sequence is that of Polyamine-transporting ATPase 13A2 from Homo sapiens (Human).